Here is a 255-residue protein sequence, read N- to C-terminus: 1-(5-phosphoribosyl)-5-[(5-phosphoribosylamino)methylideneamino] imidazole-4-carboxamide isomerase (255 aa).

The active-site Proton acceptor is the aspartate 8. Aspartate 129 serves as the catalytic Proton donor.

Belongs to the HisA/HisF family.

The protein localises to the cytoplasm. The catalysed reaction is 1-(5-phospho-beta-D-ribosyl)-5-[(5-phospho-beta-D-ribosylamino)methylideneamino]imidazole-4-carboxamide = 5-[(5-phospho-1-deoxy-D-ribulos-1-ylimino)methylamino]-1-(5-phospho-beta-D-ribosyl)imidazole-4-carboxamide. Its pathway is amino-acid biosynthesis; L-histidine biosynthesis; L-histidine from 5-phospho-alpha-D-ribose 1-diphosphate: step 4/9. The chain is 1-(5-phosphoribosyl)-5-[(5-phosphoribosylamino)methylideneamino] imidazole-4-carboxamide isomerase from Parasynechococcus marenigrum (strain WH8102).